Consider the following 312-residue polypeptide: MEIIFYHPTFNAAWWVNALEKALPHARVREWKVGDNNPADYALVWQPPVEMLAGRRLKAVFALGAGVDAILSKLNAHPEMLDASIPLFRLEDTGMGLQMQEYAVSQVLHWFRRFDDYQALKNQALWKPLPEYTREEFSVGIMGAGVLGAKVAESLQAWGFPLRCWSRSRKSWPGVESYVGREELRAFLNQTRVLINLLPNTAQTVGIINSELLDQLPDGAYVLNLARGVHVQEADLLAALDSGKLKGAMLDVFSQEPLPQESPLWRHPRVAMTPHIAAVTRPAEAIDYISRTITQLEKGEPVTGQVDRARGY.

Arginine 227 is a catalytic residue. Catalysis depends on histidine 275, which acts as the Proton donor.

Belongs to the D-isomer specific 2-hydroxyacid dehydrogenase family. GhrA subfamily.

The protein localises to the cytoplasm. The enzyme catalyses glycolate + NADP(+) = glyoxylate + NADPH + H(+). It catalyses the reaction (R)-glycerate + NAD(+) = 3-hydroxypyruvate + NADH + H(+). The catalysed reaction is (R)-glycerate + NADP(+) = 3-hydroxypyruvate + NADPH + H(+). Its function is as follows. Catalyzes the NADPH-dependent reduction of glyoxylate and hydroxypyruvate into glycolate and glycerate, respectively. This chain is Glyoxylate/hydroxypyruvate reductase A, found in Salmonella heidelberg (strain SL476).